An 877-amino-acid chain; its full sequence is Protein P (877 aa).

Residues 1–183 (MHPFSQLFRN…GKPYSWGHRQ (183 aa)) form a terminal protein domain (TP) region. The segment at 184–382 (LEQHNGQQHE…YCLHHIVSSL (199 aa)) is spacer. Positions 185-198 (EQHNGQQHESHLQS) are enriched in basic and acidic residues. A disordered region spans residues 185–347 (EQHNGQQHES…PSSSGLCGGT (163 aa)). Polar residues predominate over residues 233 to 242 (FGESQKSART). Low complexity predominate over residues 267–281 (QQGSSQVSSPRSKSS). Composition is skewed to polar residues over residues 282–302 (NFRN…PTWY) and 338–347 (PSSSGLCGGT). The tract at residues 383 to 723 (EDWGPCTISG…YAELWPVARQ (341 aa)) is polymerase/reverse transcriptase domain (RT). The Reverse transcriptase domain maps to 393-634 (DVTIRSPRTP…HHLHFMGYVI (242 aa)). Mg(2+)-binding residues include Asp-465, Asp-585, and Asp-586.

The protein belongs to the hepadnaviridae P protein family.

The catalysed reaction is DNA(n) + a 2'-deoxyribonucleoside 5'-triphosphate = DNA(n+1) + diphosphate. The enzyme catalyses Endonucleolytic cleavage to 5'-phosphomonoester.. Its activity is regulated as follows. Activated by host HSP70 and HSP40 in vitro to be able to bind the epsilon loop of the pgRNA. Because deletion of the RNase H region renders the protein partly chaperone-independent, the chaperones may be needed indirectly to relieve occlusion of the RNA-binding site by this domain. Inhibited by several reverse-transcriptase inhibitors: Lamivudine, Adefovir and Entecavir. In terms of biological role, multifunctional enzyme that converts the viral RNA genome into dsDNA in viral cytoplasmic capsids. This enzyme displays a DNA polymerase activity that can copy either DNA or RNA templates, and a ribonuclease H (RNase H) activity that cleaves the RNA strand of RNA-DNA heteroduplexes in a partially processive 3'- to 5'-endonucleasic mode. Neo-synthesized pregenomic RNA (pgRNA) are encapsidated together with the P protein, and reverse-transcribed inside the nucleocapsid. Initiation of reverse-transcription occurs first by binding the epsilon loop on the pgRNA genome, and is initiated by protein priming, thereby the 5'-end of (-)DNA is covalently linked to P protein. Partial (+)DNA is synthesized from the (-)DNA template and generates the relaxed circular DNA (RC-DNA) genome. After budding and infection, the RC-DNA migrates in the nucleus, and is converted into a plasmid-like covalently closed circular DNA (cccDNA). The activity of P protein does not seem to be necessary for cccDNA generation, and is presumably released from (+)DNA by host nuclear DNA repair machinery. The chain is Protein P from Arctic squirrel hepatitis virus (ASHV).